The following is a 191-amino-acid chain: Adenylate kinase (191 aa).

12 to 17 (GSGKTT) is a binding site for ATP. Residues 34–63 (STGDLLRAESAKKTERGLLIEKFTSQGELV) are NMP. AMP is bound by residues T35, R40, 61–63 (ELV), 88–91 (GYPR), and Q95. The LID stretch occupies residues 130–136 (GRSRGAD). R131 contributes to the ATP binding site. Residues R133 and R145 each coordinate AMP. Residue R173 participates in ATP binding.

The protein belongs to the adenylate kinase family. Monomer.

The protein resides in the cytoplasm. The catalysed reaction is AMP + ATP = 2 ADP. It participates in purine metabolism; AMP biosynthesis via salvage pathway; AMP from ADP: step 1/1. Its function is as follows. Catalyzes the reversible transfer of the terminal phosphate group between ATP and AMP. Plays an important role in cellular energy homeostasis and in adenine nucleotide metabolism. This chain is Adenylate kinase, found in Helicobacter pylori (strain HPAG1).